Consider the following 491-residue polypeptide: DEAD-box ATP-dependent RNA helicase 36 (491 aa).

Residues 1 to 10 (MEEPTPEEEG) are compositionally biased toward acidic residues. The segment at 1-56 (MEEPTPEEEGGITIMSKSRKNPKTVVNIQSQKLDSDQNTPQFEKFTNPNPSSDTTS) is disordered. Residues 24–56 (TVVNIQSQKLDSDQNTPQFEKFTNPNPSSDTTS) show a composition bias toward polar residues. A Q motif motif is present at residues 58 to 86 (TNFEGLGLAEWAVETCKELGMRKPTPVQT). Residues 89–262 (VPKILAGRDV…EHSSNKAYFY (174 aa)) form the Helicase ATP-binding domain. Residue 102-109 (AQTGSGKT) coordinates ATP. A DEAD box motif is present at residues 210–213 (DEAD). A Helicase C-terminal domain is found at 289-438 (YLVHILSQME…NKKVITDSLE (150 aa)). The disordered stretch occupies residues 471 to 491 (KTLADKGLLKKRGKRQKSTEN). A compositionally biased stretch (basic residues) spans 479-491 (LKKRGKRQKSTEN).

The protein belongs to the DEAD box helicase family. DDX49/DBP8 subfamily.

The catalysed reaction is ATP + H2O = ADP + phosphate + H(+). The chain is DEAD-box ATP-dependent RNA helicase 36 (RH36) from Arabidopsis thaliana (Mouse-ear cress).